The chain runs to 178 residues: Caveolin-1 (178 aa).

An N-acetylserine modification is found at Ser2. At Ser2 the chain carries Phosphoserine. The tract at residues 2 to 94 (SGGKYVDSEG…WKASFTTFTV (93 aa)) is required for homooligomerization. Residues 2–104 (SGGKYVDSEG…TKYWFYRLLS (103 aa)) are Cytoplasmic-facing. Lys5 carries the post-translational modification N6-acetyllysine; alternate. Lys5 is covalently cross-linked (Glycyl lysine isopeptide (Lys-Gly) (interchain with G-Cter in ubiquitin); alternate). The residue at position 6 (Tyr6) is a Phosphotyrosine. A Phosphoserine modification is found at Ser9. Tyr14 carries the phosphotyrosine; by ABL1 modification. Residue Tyr25 is modified to Phosphotyrosine. Residues Lys26, Lys30, Lys39, Lys47, and Lys57 each participate in a glycyl lysine isopeptide (Lys-Gly) (interchain with G-Cter in ubiquitin) cross-link. The tract at residues 82–94 (DGIWKASFTTFTV) is interaction with CAVIN3. Positions 105-125 (ALFGIPMALIWGIYFAILSFL) form an intramembrane region, helical. Topologically, residues 126–178 (HIWAVVPCIKSFLIEIQCISRVYSIYVHTFCDPLFEAIGKIFSNVRINLQKEI) are cytoplasmic. Positions 131 to 142 (VPCIKSFLIEIQ) are interacts with SPRY1, SPRY2, SPRY3 and SPRY4. S-palmitoyl cysteine attachment occurs at residues Cys133, Cys143, and Cys156. An interacts with SPRY1, SPRY2, and SPRY4 region spans residues 149 to 160 (SIYVHTFCDPLF). Residues 167 to 178 (FSNVRINLQKEI) are interacts with SPRY1, SPRY2, SPRY3 and SPRY4.

It belongs to the caveolin family. Homooligomer. Interacts with GLIPR2. Interacts with NOSTRIN. Interacts with SNAP25 and STX1A. Interacts (via the N-terminus) with DPP4; the interaction is direct. Interacts with CTNNB1, CDH1 and JUP. Interacts with PACSIN2; this interaction induces membrane tubulation. Interacts with SLC7A9. Interacts with BMX and BTK. Interacts with TGFBR1. Interacts with CAVIN3 (via leucine-zipper domain) in a cholesterol-sensitive manner. Interacts with CAVIN1. Interacts with EHD2 in a cholesterol-dependent manner. Forms a ternary complex with UBXN6 and VCP; mediates CAV1 targeting to lysosomes for degradation. Interacts with ABCG1; this interaction regulates ABCG1-mediated cholesterol efflux. Interacts with NEU3; this interaction enhances NEU3 sialidase activity within caveola. Interacts (via C-terminus) with SPRY1, SPRY2 (via C-terminus), SPRY3, and SPRY4. Interacts with IGFBP5; this interaction allows trafficking of IGFBP5 from the plasma membrane to the nucleus. Phosphorylated at Tyr-14 by ABL1 in response to oxidative stress. In terms of processing, ubiquitinated. Undergo monoubiquitination and multi- and/or polyubiquitination. Monoubiquitination of N-terminal lysines promotes integration in a ternary complex with UBXN6 and VCP which promotes oligomeric CAV1 targeting to lysosomes for degradation. Ubiquitinated by ZNRF1; leading to degradation and modulation of the TLR4-mediated immune response.

The protein localises to the golgi apparatus membrane. It is found in the cell membrane. It localises to the membrane. The protein resides in the caveola. Its subcellular location is the membrane raft. May act as a scaffolding protein within caveolar membranes. Forms a stable heterooligomeric complex with CAV2 that targets to lipid rafts and drives caveolae formation. Mediates the recruitment of CAVIN proteins (CAVIN1/2/3/4) to the caveolae. Interacts directly with G-protein alpha subunits and can functionally regulate their activity. Involved in the costimulatory signal essential for T-cell receptor (TCR)-mediated T-cell activation. Its binding to DPP4 induces T-cell proliferation and NF-kappa-B activation in a T-cell receptor/CD3-dependent manner. Recruits CTNNB1 to caveolar membranes and may regulate CTNNB1-mediated signaling through the Wnt pathway. Negatively regulates TGFB1-mediated activation of SMAD2/3 by mediating the internalization of TGFBR1 from membrane rafts leading to its subsequent degradation. Binds 20(S)-hydroxycholesterol (20(S)-OHC). The sequence is that of Caveolin-1 (CAV1) from Equus caballus (Horse).